The following is a 294-amino-acid chain: 4-hydroxy-tetrahydrodipicolinate synthase (294 aa).

Threonine 44 contributes to the pyruvate binding site. Tyrosine 132 functions as the Proton donor/acceptor in the catalytic mechanism. Lysine 161 (schiff-base intermediate with substrate) is an active-site residue. A pyruvate-binding site is contributed by isoleucine 206.

It belongs to the DapA family. In terms of assembly, homotetramer; dimer of dimers.

The protein localises to the cytoplasm. The enzyme catalyses L-aspartate 4-semialdehyde + pyruvate = (2S,4S)-4-hydroxy-2,3,4,5-tetrahydrodipicolinate + H2O + H(+). Its pathway is amino-acid biosynthesis; L-lysine biosynthesis via DAP pathway; (S)-tetrahydrodipicolinate from L-aspartate: step 3/4. In terms of biological role, catalyzes the condensation of (S)-aspartate-beta-semialdehyde [(S)-ASA] and pyruvate to 4-hydroxy-tetrahydrodipicolinate (HTPA). The protein is 4-hydroxy-tetrahydrodipicolinate synthase of Thermotoga sp. (strain RQ2).